Consider the following 150-residue polypeptide: 1,4-dihydroxy-2-naphthoyl-CoA hydrolase (150 aa).

Aspartate 19 is a catalytic residue.

The protein belongs to the 4-hydroxybenzoyl-CoA thioesterase family. DHNA-CoA hydrolase subfamily.

The enzyme catalyses 1,4-dihydroxy-2-naphthoyl-CoA + H2O = 1,4-dihydroxy-2-naphthoate + CoA + H(+). Its pathway is cofactor biosynthesis; phylloquinone biosynthesis. It participates in quinol/quinone metabolism; 1,4-dihydroxy-2-naphthoate biosynthesis; 1,4-dihydroxy-2-naphthoate from chorismate: step 7/7. In terms of biological role, catalyzes the hydrolysis of 1,4-dihydroxy-2-naphthoyl-CoA (DHNA-CoA) to 1,4-dihydroxy-2-naphthoate (DHNA), a reaction involved in phylloquinone (vitamin K1) biosynthesis. The sequence is that of 1,4-dihydroxy-2-naphthoyl-CoA hydrolase from Prochlorococcus marinus (strain MIT 9515).